Consider the following 104-residue polypeptide: Large ribosomal subunit protein bL21c (104 aa).

This sequence belongs to the bacterial ribosomal protein bL21 family. In terms of assembly, part of the 50S ribosomal subunit.

The protein localises to the plastid. The protein resides in the chloroplast. This protein binds to 23S rRNA. This chain is Large ribosomal subunit protein bL21c, found in Guillardia theta (Cryptophyte).